A 308-amino-acid chain; its full sequence is Ornithine carbamoyltransferase (308 aa).

Carbamoyl phosphate-binding positions include 56–59 (STRT), glutamine 83, arginine 107, and 134–137 (HPCQ). L-ornithine is bound by residues asparagine 165, aspartate 225, and 229 to 230 (SM). Carbamoyl phosphate-binding positions include 266-267 (CL) and arginine 294.

The protein belongs to the aspartate/ornithine carbamoyltransferase superfamily. OTCase family.

The protein localises to the cytoplasm. The enzyme catalyses carbamoyl phosphate + L-ornithine = L-citrulline + phosphate + H(+). Its pathway is amino-acid biosynthesis; L-arginine biosynthesis; L-arginine from L-ornithine and carbamoyl phosphate: step 1/3. In terms of biological role, reversibly catalyzes the transfer of the carbamoyl group from carbamoyl phosphate (CP) to the N(epsilon) atom of ornithine (ORN) to produce L-citrulline. The protein is Ornithine carbamoyltransferase of Ruegeria pomeroyi (strain ATCC 700808 / DSM 15171 / DSS-3) (Silicibacter pomeroyi).